We begin with the raw amino-acid sequence, 320 residues long: Glycerol-3-phosphate dehydrogenase [NAD(P)+] (320 aa).

NADPH is bound by residues Ser14, Phe15, Arg35, and Lys109. Residues Lys109 and Gly137 each coordinate sn-glycerol 3-phosphate. Ala141 is a binding site for NADPH. Sn-glycerol 3-phosphate-binding residues include Lys192, Asp248, Ser258, Arg259, and Asn260. Lys192 (proton acceptor) is an active-site residue. Residue Arg259 participates in NADPH binding. Positions 283 and 285 each coordinate NADPH.

It belongs to the NAD-dependent glycerol-3-phosphate dehydrogenase family.

Its subcellular location is the cytoplasm. The enzyme catalyses sn-glycerol 3-phosphate + NAD(+) = dihydroxyacetone phosphate + NADH + H(+). It carries out the reaction sn-glycerol 3-phosphate + NADP(+) = dihydroxyacetone phosphate + NADPH + H(+). It functions in the pathway membrane lipid metabolism; glycerophospholipid metabolism. Its function is as follows. Catalyzes the reduction of the glycolytic intermediate dihydroxyacetone phosphate (DHAP) to sn-glycerol 3-phosphate (G3P), the key precursor for phospholipid synthesis. This chain is Glycerol-3-phosphate dehydrogenase [NAD(P)+], found in Rickettsia typhi (strain ATCC VR-144 / Wilmington).